The chain runs to 386 residues: Putative nickel insertion protein (386 aa).

Belongs to the LarC family.

The sequence is that of Putative nickel insertion protein from Dictyoglomus thermophilum (strain ATCC 35947 / DSM 3960 / H-6-12).